A 506-amino-acid chain; its full sequence is Beta-glucosidase 9 (506 aa).

Positions 1–22 (MKHFSLLFIFLVILLATSYSDA) are cleaved as a signal peptide. A beta-D-glucoside-binding positions include Gln-42, His-139, and 184 to 185 (NE). The active-site Proton donor is the Glu-185. The cysteines at positions 204 and 212 are disulfide-linked. 2 N-linked (GlcNAc...) asparagine glycosylation sites follow: Asn-211 and Asn-216. Residue Tyr-328 coordinates a beta-D-glucoside. Asn-363 carries an N-linked (GlcNAc...) asparagine glycan. Residue Glu-396 coordinates a beta-D-glucoside. Glu-396 acts as the Nucleophile in catalysis. N-linked (GlcNAc...) asparagine glycosylation occurs at Asn-429. Residues Trp-439 and Phe-455 each coordinate a beta-D-glucoside. Asn-461, Asn-483, and Asn-499 each carry an N-linked (GlcNAc...) asparagine glycan.

Belongs to the glycosyl hydrolase 1 family.

The catalysed reaction is Hydrolysis of terminal, non-reducing beta-D-glucosyl residues with release of beta-D-glucose.. The chain is Beta-glucosidase 9 from Arabidopsis thaliana (Mouse-ear cress).